Here is a 210-residue protein sequence, read N- to C-terminus: ATP-dependent Clp protease proteolytic subunit (210 aa).

The active-site Nucleophile is the Ser106. The active site involves His131.

The protein belongs to the peptidase S14 family. As to quaternary structure, fourteen ClpP subunits assemble into 2 heptameric rings which stack back to back to give a disk-like structure with a central cavity, resembling the structure of eukaryotic proteasomes.

The protein localises to the cytoplasm. The catalysed reaction is Hydrolysis of proteins to small peptides in the presence of ATP and magnesium. alpha-casein is the usual test substrate. In the absence of ATP, only oligopeptides shorter than five residues are hydrolyzed (such as succinyl-Leu-Tyr-|-NHMec, and Leu-Tyr-Leu-|-Tyr-Trp, in which cleavage of the -Tyr-|-Leu- and -Tyr-|-Trp bonds also occurs).. In terms of biological role, cleaves peptides in various proteins in a process that requires ATP hydrolysis. Has a chymotrypsin-like activity. Plays a major role in the degradation of misfolded proteins. The protein is ATP-dependent Clp protease proteolytic subunit of Azospirillum brasilense.